Here is a 671-residue protein sequence, read N- to C-terminus: Pescadillo homolog (671 aa).

2 coiled-coil regions span residues 294 to 323 and 548 to 584; these read NQAQ…ELFR and QALR…TRKM. Residues 317-403 enclose the BRCT domain; it reads KVRELFRGLT…LVLPVTGYRI (87 aa). Disordered stretches follow at residues 552–577 and 634–671; these read KAQE…VKRQ and GLVN…KWVQ. Residues 634–651 are compositionally biased toward basic and acidic residues; it reads GLVNKRLEARRQRAEAKG.

The protein belongs to the pescadillo family.

The protein resides in the nucleus. The protein localises to the nucleolus. It localises to the nucleoplasm. Required for maturation of ribosomal RNAs and formation of the large ribosomal subunit. The protein is Pescadillo homolog of Leishmania major.